The sequence spans 338 residues: MAEISILGAGGLTGKELLLLLSRQKEHEVVHITSDKLAGKTLAEVFPEIPFPKNLTFHSHEAAIPSQSLVVLAVPNNVSIESAPKFLDSGHKVIDLSGAYRLHNQEIFEKAYQLKHTQFSYVDKAVFGIPEIFRDKLKNADFVSNPGCFSTSVILPVFLLNELRKNLRPRIIADSKSGVSGAGGRTEDAGYSYTGVYENFRAYKILSHQHEPEIKEYIYANSGLLEPEVIFTPHLLPVYRGILSTIVLELDTESFSDPISILQNSCKNEPFLRILKTPEEIELKRVQHTNFLDISVRKRGNTLVIVSALDNLIKGAAGQALQNINLMTGTKEVLGLFP.

The active site involves Cys-148.

This sequence belongs to the NAGSA dehydrogenase family. Type 1 subfamily.

Its subcellular location is the cytoplasm. The enzyme catalyses N-acetyl-L-glutamate 5-semialdehyde + phosphate + NADP(+) = N-acetyl-L-glutamyl 5-phosphate + NADPH + H(+). It participates in amino-acid biosynthesis; L-arginine biosynthesis; N(2)-acetyl-L-ornithine from L-glutamate: step 3/4. Its function is as follows. Catalyzes the NADPH-dependent reduction of N-acetyl-5-glutamyl phosphate to yield N-acetyl-L-glutamate 5-semialdehyde. The polypeptide is N-acetyl-gamma-glutamyl-phosphate reductase (Leptospira borgpetersenii serovar Hardjo-bovis (strain JB197)).